The primary structure comprises 1909 residues: Plexin-B3 (1909 aa).

A signal peptide spans 1-44 (MCHAAQETPLLHHFMAPVMARWPPFGLCLLLLLLSPPPLPLTGA). The region spanning 45–471 (HRFSAPNTTL…TAHQVDRIPV (427 aa)) is the Sema domain. Residues 45–1255 (HRFSAPNTTL…PLSAFPVEAQ (1211 aa)) lie on the Extracellular side of the membrane. Residue N51 is glycosylated (N-linked (GlcNAc...) asparagine). 2 disulfides stabilise this stretch: C98–C107 and C132–C140. The N-linked (GlcNAc...) asparagine glycan is linked to N231. Disulfide bonds link C267–C370, C283–C315, C333–C357, C474–C491, C480–C525, C483–C500, C494–C506, and C562–C580. In terms of domain architecture, PSI 1 spans 473 to 526 (ACPQFPDCASCLQAQDPLCGWCVLQGRCTRKGQCGRAGQLNQWLWSYEEDSHCL). Residue N615 is glycosylated (N-linked (GlcNAc...) asparagine). 2 consecutive PSI domains span residues 620 to 682 (DCSA…GACP) and 787 to 833 (DCAM…LLCP). N-linked (GlcNAc...) asparagine glycans are attached at residues N802, N900, N957, N1101, and N1218. IPT/TIG domains follow at residues 835-925 (PSID…FTYQ), 927-1012 (PVLL…FRYT), 1015-1145 (PQLV…FLYQ), and 1159-1244 (ARPY…YEAE). The helical transmembrane segment at 1256 to 1276 (AGVGMGAAVLIAAVLLLTLMY) threads the bilayer. The Cytoplasmic portion of the chain corresponds to 1277-1909 (RHKSKQALRD…ALVENKVTDL (633 aa)).

This sequence belongs to the plexin family. In terms of assembly, interacts (via cytoplasmic domain) with RAC1 and ARHGDIA. Binds MET and MST1R. Interacts (via cytoplasmic domain) with FSCN1. Interacts with RIT2/RIN. May form homodimers (via Sema domain). As to expression, expression detected in Purkinje and granular cells in cerebellum, and in brain neocortex but not in corpus callosum. Expressed in glioma cells and embryonic kidney cells (at protein level). Expressed in brain, liver, pancreas and placenta, with weak expression detected also in lung and kidney. Expressed in several glioma cell lines.

The protein resides in the cell membrane. Receptor for SEMA5A that plays a role in axon guidance, invasive growth and cell migration. Stimulates neurite outgrowth and mediates Ca(2+)/Mg(2+)-dependent cell aggregation. In glioma cells, SEMA5A stimulation of PLXNB3 results in the disassembly of F-actin stress fibers, disruption of focal adhesions and cellular collapse as well as inhibition of cell migration and invasion through ARHGDIA-mediated inactivation of RAC1. The protein is Plexin-B3 (PLXNB3) of Homo sapiens (Human).